A 399-amino-acid polypeptide reads, in one-letter code: Methylthioribose kinase (399 aa).

ATP is bound by residues Asn-40, Lys-57, and 111–113 (EDL). Asp-229 provides a ligand contact to substrate. 246–248 (DAE) is a binding site for ATP. Arg-344 contacts substrate.

Belongs to the methylthioribose kinase family. As to quaternary structure, homodimer.

The catalysed reaction is 5-(methylsulfanyl)-D-ribose + ATP = 5-(methylsulfanyl)-alpha-D-ribose 1-phosphate + ADP + H(+). The protein operates within amino-acid biosynthesis; L-methionine biosynthesis via salvage pathway; S-methyl-5-thio-alpha-D-ribose 1-phosphate from S-methyl-5'-thioadenosine (hydrolase route): step 2/2. Catalyzes the phosphorylation of methylthioribose into methylthioribose-1-phosphate. In Cronobacter sakazakii (strain ATCC BAA-894) (Enterobacter sakazakii), this protein is Methylthioribose kinase.